The following is a 187-amino-acid chain: Ribosome-recycling factor (187 aa).

It belongs to the RRF family.

The protein localises to the cytoplasm. Functionally, responsible for the release of ribosomes from messenger RNA at the termination of protein biosynthesis. May increase the efficiency of translation by recycling ribosomes from one round of translation to another. The polypeptide is Ribosome-recycling factor (Paracoccus zeaxanthinifaciens).